A 162-amino-acid chain; its full sequence is Probable chorismate pyruvate-lyase (162 aa).

3 residues coordinate substrate: R54, L92, and E149.

It belongs to the UbiC family.

It localises to the cytoplasm. The enzyme catalyses chorismate = 4-hydroxybenzoate + pyruvate. It functions in the pathway cofactor biosynthesis; ubiquinone biosynthesis. Removes the pyruvyl group from chorismate, with concomitant aromatization of the ring, to provide 4-hydroxybenzoate (4HB) for the ubiquinone pathway. The sequence is that of Probable chorismate pyruvate-lyase from Methylococcus capsulatus (strain ATCC 33009 / NCIMB 11132 / Bath).